We begin with the raw amino-acid sequence, 396 residues long: Chorismate synthase (396 aa).

NADP(+) is bound by residues R40 and R46. Residues 134–136, 257–258, G302, 317–321, and R343 each bind FMN; these read RSS, QA, and KPIPS.

The protein belongs to the chorismate synthase family. As to quaternary structure, homotetramer. Requires FMNH2 as cofactor.

The catalysed reaction is 5-O-(1-carboxyvinyl)-3-phosphoshikimate = chorismate + phosphate. It participates in metabolic intermediate biosynthesis; chorismate biosynthesis; chorismate from D-erythrose 4-phosphate and phosphoenolpyruvate: step 7/7. Functionally, catalyzes the anti-1,4-elimination of the C-3 phosphate and the C-6 proR hydrogen from 5-enolpyruvylshikimate-3-phosphate (EPSP) to yield chorismate, which is the branch point compound that serves as the starting substrate for the three terminal pathways of aromatic amino acid biosynthesis. This reaction introduces a second double bond into the aromatic ring system. This is Chorismate synthase from Bifidobacterium animalis subsp. lactis (strain AD011).